The following is a 327-amino-acid chain: Cysteine synthase (327 aa).

Lys-65 is subject to N6-(pyridoxal phosphate)lysine. Pyridoxal 5'-phosphate-binding positions include Asn-95, Gly-200–Thr-204, and Ser-282.

Belongs to the cysteine synthase/cystathionine beta-synthase family. Pyridoxal 5'-phosphate is required as a cofactor.

The enzyme catalyses O-acetyl-L-serine + hydrogen sulfide = L-cysteine + acetate. Its pathway is amino-acid biosynthesis; L-cysteine biosynthesis; L-cysteine from L-serine: step 2/2. In Aquifex aeolicus (strain VF5), this protein is Cysteine synthase (cysM).